A 204-amino-acid polypeptide reads, in one-letter code: Methylthioribulose-1-phosphate dehydratase (204 aa).

Zn(2+)-binding residues include His94 and His96.

It belongs to the aldolase class II family. MtnB subfamily. The cofactor is Zn(2+).

It catalyses the reaction 5-(methylsulfanyl)-D-ribulose 1-phosphate = 5-methylsulfanyl-2,3-dioxopentyl phosphate + H2O. It participates in amino-acid biosynthesis; L-methionine biosynthesis via salvage pathway; L-methionine from S-methyl-5-thio-alpha-D-ribose 1-phosphate: step 2/6. In terms of biological role, catalyzes the dehydration of methylthioribulose-1-phosphate (MTRu-1-P) into 2,3-diketo-5-methylthiopentyl-1-phosphate (DK-MTP-1-P). The protein is Methylthioribulose-1-phosphate dehydratase of Cronobacter sakazakii (strain ATCC BAA-894) (Enterobacter sakazakii).